We begin with the raw amino-acid sequence, 404 residues long: Propionate kinase (404 aa).

The protein belongs to the acetokinase family. PduW subfamily.

It localises to the cytoplasm. The enzyme catalyses propanoate + ATP = propanoyl phosphate + ADP. It functions in the pathway polyol metabolism; 1,2-propanediol degradation. Works with phosphate acetyltransferase (pta) to capture exogenous propionate and regenerate propionyl-CoA during degradation of 1,2-propanediol (1,2-PD). In Klebsiella pneumoniae subsp. pneumoniae (strain ATCC 700721 / MGH 78578), this protein is Propionate kinase.